Here is a 392-residue protein sequence, read N- to C-terminus: THO complex subunit MFT1 (392 aa).

Acidic residues-rich tracts occupy residues Asp258–Glu271 and Asn290–Gly330. Positions Asp258 to Lys392 are disordered. The residue at position 266 (Ser266) is a Phosphoserine. Residues Glu331 to Asn344 are compositionally biased toward polar residues. The segment covering Glu345–Asp367 has biased composition (acidic residues). Residues Gly377–Lys392 show a composition bias toward polar residues.

Component of the THO complex, which is composed of HPR1, MFT1, THO2 and THP2. Together with SUB2, TEX1 and YRA1, THO forms the transcription/export (TREX) complex. THO associates with DNA and RNA in vitro.

It localises to the nucleus. In terms of biological role, component the THO subcomplex of the TREX complex, which operates in coupling transcription elongation to mRNA export. The THO complex is recruited to transcribed genes and moves along the gene with the elongating polymerase during transcription. THO is important for stabilizing nascent RNA in the RNA polymerase II elongation complex by preventing formation of DNA:RNA hybrids behind the elongating polymerase. It functions in cotranscriptional formation of an export-competent messenger ribonucleoprotein particle (mRNP) by facilitating the loading of ATP-dependent RNA helicase SUB2 and the mRNA export factor YRA1 along the nascent mRNA. The polypeptide is THO complex subunit MFT1 (MFT1) (Saccharomyces cerevisiae (strain ATCC 204508 / S288c) (Baker's yeast)).